The sequence spans 490 residues: MDLVVVLGLCLSCLLLPSLWKQSHGGGKLPPGPTPFPILGNVLQLDFKDLSKSLTNLSKVYGPVFTVYLGMKPTVVVHGYEAVKEALVDLGHELSGRSRFLVTAKLNKGFGVIFSNGKRWTETRRFSLMTLRNFGMGKRSIEERVQEEAHCLVEELRKTNASPCDPTFILGAAPCNVICSVIFQNRFDYTDQDFLSLMGKFNENFKILNSPWVQFCNCFPILFDYFPGSHRKAVKNIFYVKNYITEQIKEHQKSLDINNPRDFIDCFLIKMEQEKCNQQSEFTIENLLTTVSDVFMAGTETTSTTLRYGLLLLMKHPEVIAKVQEEIERVIGRHRSPCMQDRSRMPYTDATVHEIQRYINLIPNNVPHTTICNLKFRNYLIPKGTDVLTSLSSVLHDDKEFPNPDRFDPGHFLDASGNFRKSDYFMPFSTGKRVCVGEALARMELFLFLTAILQNFTPKPLVNPNNVDENPFSSGIVRVPPLYRVSFIPV.

Cysteine 435 is a binding site for heme.

The protein belongs to the cytochrome P450 family. Heme is required as a cofactor.

The protein resides in the endoplasmic reticulum membrane. Its subcellular location is the microsome membrane. The catalysed reaction is an organic molecule + reduced [NADPH--hemoprotein reductase] + O2 = an alcohol + oxidized [NADPH--hemoprotein reductase] + H2O + H(+). Its function is as follows. Cytochromes P450 are a group of heme-thiolate monooxygenases. In liver microsomes, this enzyme is involved in an NADPH-dependent electron transport pathway. It oxidizes a variety of structurally unrelated compounds, including steroids, fatty acids, and xenobiotics. In the epoxidation of arachidonic acid it generates only 14,15- and 11,12-cis-epoxyeicosatrienoic acids. This Oryctolagus cuniculus (Rabbit) protein is Cytochrome P450 2C2 (CYP2C2).